A 178-amino-acid chain; its full sequence is Cytochrome b6-f complex iron-sulfur subunit (178 aa).

A helical transmembrane segment spans residues 20 to 42; it reads LLTFGTATGVALGALYPVANYFM. The region spanning 65–161 is the Rieske domain; that stretch reads KTGWLATHQA…VDIEDDAVLV (97 aa). Residues C107, H109, C125, and H128 each contribute to the [2Fe-2S] cluster site. A disulfide bond links C112 and C127.

Belongs to the Rieske iron-sulfur protein family. As to quaternary structure, the 4 large subunits of the cytochrome b6-f complex are cytochrome b6, subunit IV (17 kDa polypeptide, PetD), cytochrome f and the Rieske protein, while the 4 small subunits are PetG, PetL, PetM and PetN. The complex functions as a dimer. The cofactor is [2Fe-2S] cluster.

It localises to the cellular thylakoid membrane. It carries out the reaction 2 oxidized [plastocyanin] + a plastoquinol + 2 H(+)(in) = 2 reduced [plastocyanin] + a plastoquinone + 4 H(+)(out). In terms of biological role, component of the cytochrome b6-f complex, which mediates electron transfer between photosystem II (PSII) and photosystem I (PSI), cyclic electron flow around PSI, and state transitions. In Prochlorococcus marinus (strain AS9601), this protein is Cytochrome b6-f complex iron-sulfur subunit.